The primary structure comprises 215 residues: 3-isopropylmalate dehydratase small subunit (215 aa).

The protein belongs to the LeuD family. LeuD type 1 subfamily. In terms of assembly, heterodimer of LeuC and LeuD.

The catalysed reaction is (2R,3S)-3-isopropylmalate = (2S)-2-isopropylmalate. It participates in amino-acid biosynthesis; L-leucine biosynthesis; L-leucine from 3-methyl-2-oxobutanoate: step 2/4. Functionally, catalyzes the isomerization between 2-isopropylmalate and 3-isopropylmalate, via the formation of 2-isopropylmaleate. The polypeptide is 3-isopropylmalate dehydratase small subunit (Xylella fastidiosa (strain M23)).